Here is a 383-residue protein sequence, read N- to C-terminus: UDP-N-acetylenolpyruvoylglucosamine reductase (383 aa).

Residues 42 to 212 (LSCQAMQLIT…TRVGFKLHKD (171 aa)) enclose the FAD-binding PCMH-type domain. R189 is an active-site residue. The Proton donor role is filled by S267. E369 is a catalytic residue.

It belongs to the MurB family. Requires FAD as cofactor.

The protein resides in the cytoplasm. It catalyses the reaction UDP-N-acetyl-alpha-D-muramate + NADP(+) = UDP-N-acetyl-3-O-(1-carboxyvinyl)-alpha-D-glucosamine + NADPH + H(+). The protein operates within cell wall biogenesis; peptidoglycan biosynthesis. Cell wall formation. The chain is UDP-N-acetylenolpyruvoylglucosamine reductase from Psychrobacter sp. (strain PRwf-1).